The primary structure comprises 278 residues: MCRRPDCGFSFSPGPVILLWCCLLLPIVSSAAVSVAPTAAEKVPAECPELTRRCLLGEVFQGDKYESWLRPLVNVTGRDGPLSQLIRYRPVTPEAANSVLLDEAFLDTLALLYNNPDQLRALLTLLSSDTAPRWMTVMRGYSECGDGSPAVYTCVDDLCRGYDLTRLSYGRSIFTEHVLGFELVPPSLFNVVVAIRNEATRTNRAVRLPVSTAAAPEGITLFYGLYNAVKEFCLRHQLDPPLLRHLDKYYAGLPPELKQTRVNLPAHSRYGPQAVDAR.

The signal sequence occupies residues 1–30; sequence MCRRPDCGFSFSPGPVILLWCCLLLPIVSS. Residues 43–256 enclose the gL betaherpesvirus-type domain; that stretch reads VPAECPELTR…DKYYAGLPPE (214 aa). Cysteines 154 and 159 form a disulfide.

Belongs to the herpesviridae glycoprotein L (gL) family. Betaherpesvirinae gL subfamily. Interacts with glycoprotein H (gH); this interaction is necessary for the correct processing and cell surface expression of gH. Forms the envelope pentamer complex (PC) composed of gH, gL, UL128, UL130, and UL131A. The pentamer interacts with host NRP2. Forms the envelope trimer complex composed of gH, gL, and gO. The trimer interacts with host PDGFRA. The trimer also interacts with host EPHA2.

It is found in the virion membrane. Its subcellular location is the host cell membrane. It localises to the host Golgi apparatus. The protein localises to the host trans-Golgi network. In terms of biological role, the heterodimer glycoprotein H-glycoprotein L is required for the fusion of viral and plasma membranes leading to virus entry into the host cell. Acts as a functional inhibitor of gH and maintains gH in an inhibited form. Upon binding to host integrins, gL dissociates from gH leading to activation of the viral fusion glycoproteins gB and gH. In human cytomegalovirus, forms two distincts complexes to mediate viral entry, a trimer and a pentamer at the surface of the virion envelope. The gH-gL-gO trimer is required for infection in fibroblasts by interacting with host PDGFRA, and in glioblastoma cells by interacting with host EPHA2. The gH-gL-UL128-UL130-UL131A pentamer is essential for viral entry in epithelial, endothelial and myeloid cells via interaction with host NRP2. The protein is Envelope glycoprotein L of Human cytomegalovirus (strain 5035) (HHV-5).